We begin with the raw amino-acid sequence, 118 residues long: MATATSKAKPSDRIKMRIRKGDTVQVIAGKDKGKTGEVLRTLPNENRLIVEGVNMRTRHEKPTQEGETGRIVNEEASLHASNVMLYSTAKKVASRVEIVVEKDGSKKRKLKKTGEVLD.

It belongs to the universal ribosomal protein uL24 family. Part of the 50S ribosomal subunit.

In terms of biological role, one of two assembly initiator proteins, it binds directly to the 5'-end of the 23S rRNA, where it nucleates assembly of the 50S subunit. Its function is as follows. One of the proteins that surrounds the polypeptide exit tunnel on the outside of the subunit. This Parasynechococcus marenigrum (strain WH8102) protein is Large ribosomal subunit protein uL24.